A 159-amino-acid polypeptide reads, in one-letter code: uncharacterized protein (159 aa).

This is an uncharacterized protein from Bacillus subtilis (strain 168).